Here is a 133-residue protein sequence, read N- to C-terminus: Putative biopolymer transport protein ExbD-like 2 (133 aa).

Over Met1 to Val9 the chain is Cytoplasmic. The helical transmembrane segment at Val10–Val30 threads the bilayer. Over Gln31 to Asn133 the chain is Periplasmic.

It belongs to the ExbD/TolR family.

The protein resides in the cell inner membrane. In Helicobacter pylori (strain J99 / ATCC 700824) (Campylobacter pylori J99), this protein is Putative biopolymer transport protein ExbD-like 2.